Reading from the N-terminus, the 155-residue chain is 6,7-dimethyl-8-ribityllumazine synthase (155 aa).

5-amino-6-(D-ribitylamino)uracil-binding positions include Phe-22, 56–58 (AFE), and 80–82 (AVI). Position 85–86 (85–86 (AT)) interacts with (2S)-2-hydroxy-3-oxobutyl phosphate. His-88 acts as the Proton donor in catalysis. Phe-113 lines the 5-amino-6-(D-ribitylamino)uracil pocket. Residue Arg-127 participates in (2S)-2-hydroxy-3-oxobutyl phosphate binding.

It belongs to the DMRL synthase family.

The enzyme catalyses (2S)-2-hydroxy-3-oxobutyl phosphate + 5-amino-6-(D-ribitylamino)uracil = 6,7-dimethyl-8-(1-D-ribityl)lumazine + phosphate + 2 H2O + H(+). It participates in cofactor biosynthesis; riboflavin biosynthesis; riboflavin from 2-hydroxy-3-oxobutyl phosphate and 5-amino-6-(D-ribitylamino)uracil: step 1/2. Functionally, catalyzes the formation of 6,7-dimethyl-8-ribityllumazine by condensation of 5-amino-6-(D-ribitylamino)uracil with 3,4-dihydroxy-2-butanone 4-phosphate. This is the penultimate step in the biosynthesis of riboflavin. This chain is 6,7-dimethyl-8-ribityllumazine synthase, found in Clostridium acetobutylicum (strain ATCC 824 / DSM 792 / JCM 1419 / IAM 19013 / LMG 5710 / NBRC 13948 / NRRL B-527 / VKM B-1787 / 2291 / W).